The sequence spans 259 residues: uncharacterized protein (259 aa).

6 helical membrane-spanning segments follow: residues isoleucine 9–leucine 31, leucine 84–phenylalanine 106, phenylalanine 126–glycine 148, serine 153–valine 175, histidine 196–alanine 215, and threonine 230–glycine 252.

Its subcellular location is the cell membrane. This is an uncharacterized protein from Archaeoglobus fulgidus (strain ATCC 49558 / DSM 4304 / JCM 9628 / NBRC 100126 / VC-16).